The sequence spans 215 residues: MIKSTIALPSFFIVLILALVNSVAASSSYAPVAISLPAFSKECLYYDMVTEDDSLAVGYQVLTGGNFEIDFDITAPDGSVITSEKQKKYSDFLLKSFGVGKYTFCFSNNYGTALKKVEITLEKEKTLTDEHEADVNNDDIIANNAVEEIDRNLNKITKTLNYLRAREWRNMSTVNSTESRLTWLSILIIIIIAVISIAQVLLIQFLFTGRQKNYV.

A signal peptide spans 1-25 (MIKSTIALPSFFIVLILALVNSVAA). At 26-182 (SSSYAPVAIS…TVNSTESRLT (157 aa)) the chain is on the lumenal side. The GOLD domain occupies 41 to 123 (KECLYYDMVT…LKKVEITLEK (83 aa)). Residues 183 to 203 (WLSILIIIIIAVISIAQVLLI) form a helical membrane-spanning segment. The Cytoplasmic portion of the chain corresponds to 204–215 (QFLFTGRQKNYV).

It belongs to the EMP24/GP25L family. Associates with EMP24, ERV25 and ERP1.

It localises to the endoplasmic reticulum membrane. Functionally, involved in vesicular protein trafficking. The sequence is that of Protein ERP2 (ERP2) from Saccharomyces cerevisiae (strain ATCC 204508 / S288c) (Baker's yeast).